We begin with the raw amino-acid sequence, 521 residues long: Nitric oxide reductase transcription regulator NorR2 (521 aa).

Aspartate 56 bears the 4-aspartylphosphate mark. The Sigma-54 factor interaction domain maps to 193–422; sequence IIGQSEAIAN…LEHVISRAAL (230 aa). ATP contacts are provided by residues 221 to 228 and 293 to 302; these read GETGVGKE and EVGELPLAIQ. Residues 497-516 constitute a DNA-binding region (H-T-H motif); the sequence is WAQAARQLGIDASNLHKLAR.

It participates in nitrogen metabolism; nitrate reduction (denitrification) [regulation]. In terms of biological role, required for the nitric oxide (NO) induced expression of NO reductase. Not required for expression of 2 other pathway members, nitrate reductase (nirS) and nitrous oxide reductase (nosZ). The sequence is that of Nitric oxide reductase transcription regulator NorR2 (norR2) from Cupriavidus necator (strain ATCC 17699 / DSM 428 / KCTC 22496 / NCIMB 10442 / H16 / Stanier 337) (Ralstonia eutropha).